Consider the following 282-residue polypeptide: Bifunctional protein FolD (282 aa).

NADP(+)-binding positions include 165–167 (GAS) and I231.

Belongs to the tetrahydrofolate dehydrogenase/cyclohydrolase family. Homodimer.

The catalysed reaction is (6R)-5,10-methylene-5,6,7,8-tetrahydrofolate + NADP(+) = (6R)-5,10-methenyltetrahydrofolate + NADPH. The enzyme catalyses (6R)-5,10-methenyltetrahydrofolate + H2O = (6R)-10-formyltetrahydrofolate + H(+). The protein operates within one-carbon metabolism; tetrahydrofolate interconversion. Catalyzes the oxidation of 5,10-methylenetetrahydrofolate to 5,10-methenyltetrahydrofolate and then the hydrolysis of 5,10-methenyltetrahydrofolate to 10-formyltetrahydrofolate. The protein is Bifunctional protein FolD of Francisella philomiragia subsp. philomiragia (strain ATCC 25017 / CCUG 19701 / FSC 153 / O#319-036).